A 179-amino-acid polypeptide reads, in one-letter code: Diphosphoinositol polyphosphate phosphohydrolase 2 (179 aa).

Residues arginine 9, 17-19 (KKR), and 38-40 (SSR) each bind substrate. Residues 17–143 (KKRAACLCFR…VHAEYLEKLK (127 aa)) form the Nudix hydrolase domain. Mg(2+) is bound by residues glycine 49 and glutamate 65. A Nudix box motif is present at residues 50–71 (GGMEPEEEPGGAAVREVYEEAG). The Proton acceptor role is filled by glutamate 68. Position 69 (glutamate 69) interacts with Mg(2+). Substrate-binding positions include 88-90 (RKH), arginine 114, and lysine 132.

Belongs to the Nudix hydrolase family. DIPP subfamily. Mg(2+) serves as cofactor. The cofactor is Mn(2+).

The protein localises to the cytoplasm. It catalyses the reaction diphospho-myo-inositol polyphosphate + H2O = myo-inositol polyphosphate + phosphate.. The enzyme catalyses 5-diphospho-1D-myo-inositol 1,2,3,4,6-pentakisphosphate + H2O = 1D-myo-inositol hexakisphosphate + phosphate + H(+). It carries out the reaction 3,5-bis(diphospho)-1D-myo-inositol 1,2,4,6-tetrakisphosphate + H2O = 3-diphospho-1D-myo-inositol 1,2,4,5,6-pentakisphosphate + phosphate + 2 H(+). The catalysed reaction is 5-diphospho-1D-myo-inositol 1,3,4,6-tetrakisphosphate + H2O = 1D-myo-inositol 1,3,4,5,6-pentakisphosphate + phosphate + H(+). It catalyses the reaction P(1),P(6)-bis(5'-adenosyl) hexaphosphate + H2O = 2 ATP + 2 H(+). The enzyme catalyses P(1),P(5)-bis(5'-adenosyl) pentaphosphate + H2O = ADP + ATP + 2 H(+). It carries out the reaction 5-phospho-alpha-D-ribose 1-diphosphate + H2O = alpha-D-ribose 1,5-bisphosphate + phosphate + H(+). Functionally, cleaves the beta-phosphate from diphosphoinositol polyphosphates such as PP-InsP5 (diphosphoinositol pentakisphosphate), PP-InsP4 (diphosphoinositol tetrakisphosphate) and [PP]2-InsP4 (bisdiphosphoinositol tetrakisphosphate), suggesting that it may play a role in signal transduction. Diadenosine polyphosphates, particularly Ap6A (P(1),P(6)-bis(5a-adenosyl) hexaphosphate) and Ap5A (P(1),P(5)-bis(5'-adenosyl) pentaphosphate) are downstream effectors of a signaling cascade that regulates cardiac KATP channels, can also be substrates, although with lower preference than the diphosphoinositol polyphosphates. Can also catalyze the hydrolysis of 5-phosphoribose 1-diphosphate, generating the glycolytic activator ribose 1,5-bisphosphate. Does not play a role in U8 snoRNA decapping activity. Binds U8 snoRNA. The polypeptide is Diphosphoinositol polyphosphate phosphohydrolase 2 (Mus musculus (Mouse)).